The primary structure comprises 277 residues: 3-methyl-2-oxobutanoate hydroxymethyltransferase (277 aa).

Asp-53 and Asp-96 together coordinate Mg(2+). 3-methyl-2-oxobutanoate contacts are provided by residues 53 to 54, Asp-96, and Lys-126; that span reads DS. Glu-128 lines the Mg(2+) pocket. Glu-195 (proton acceptor) is an active-site residue.

Belongs to the PanB family. Homodecamer; pentamer of dimers. It depends on Mg(2+) as a cofactor.

It is found in the cytoplasm. It carries out the reaction 3-methyl-2-oxobutanoate + (6R)-5,10-methylene-5,6,7,8-tetrahydrofolate + H2O = 2-dehydropantoate + (6S)-5,6,7,8-tetrahydrofolate. It participates in cofactor biosynthesis; (R)-pantothenate biosynthesis; (R)-pantoate from 3-methyl-2-oxobutanoate: step 1/2. Catalyzes the reversible reaction in which hydroxymethyl group from 5,10-methylenetetrahydrofolate is transferred onto alpha-ketoisovalerate to form ketopantoate. This chain is 3-methyl-2-oxobutanoate hydroxymethyltransferase, found in Chlorobaculum tepidum (strain ATCC 49652 / DSM 12025 / NBRC 103806 / TLS) (Chlorobium tepidum).